A 1071-amino-acid polypeptide reads, in one-letter code: DNA-directed RNA polymerase subunit beta (1071 aa).

This sequence belongs to the RNA polymerase beta chain family. In plastids the minimal PEP RNA polymerase catalytic core is composed of four subunits: alpha, beta, beta', and beta''. When a (nuclear-encoded) sigma factor is associated with the core the holoenzyme is formed, which can initiate transcription.

The protein resides in the plastid. It is found in the chloroplast. It catalyses the reaction RNA(n) + a ribonucleoside 5'-triphosphate = RNA(n+1) + diphosphate. DNA-dependent RNA polymerase catalyzes the transcription of DNA into RNA using the four ribonucleoside triphosphates as substrates. This chain is DNA-directed RNA polymerase subunit beta, found in Acorus gramineus (Dwarf sweet flag).